The following is a 380-amino-acid chain: Cytochrome b (380 aa).

The next 4 membrane-spanning stretches (helical) occupy residues 33–53 (FGSLLGLCLIVQILTGLFLAM), 77–98 (WLIRYMHANGASMFFICLFLHV), 113–133 (WNMGIVLLFAVMATAFMGYVL), and 178–198 (FFAFHFILPFIITALVLVHLL). The heme site is built by His-83 and His-97. Residues His-182 and His-196 each coordinate heme. His-201 serves as a coordination point for a ubiquinone. Transmembrane regions (helical) follow at residues 226–246 (VKDFLGVLILLMAFMILTLFF), 288–308 (LGGVLALILSIVILAFMPLLH), 320–340 (ITQTMYWILVADLLVLTWIGG), and 347–367 (FIIIGQTASIAYFTIIVIFMP).

The protein belongs to the cytochrome b family. The cytochrome bc1 complex contains 11 subunits: 3 respiratory subunits (MT-CYB, CYC1 and UQCRFS1), 2 core proteins (UQCRC1 and UQCRC2) and 6 low-molecular weight proteins (UQCRH/QCR6, UQCRB/QCR7, UQCRQ/QCR8, UQCR10/QCR9, UQCR11/QCR10 and a cleavage product of UQCRFS1). This cytochrome bc1 complex then forms a dimer. The cofactor is heme.

Its subcellular location is the mitochondrion inner membrane. Component of the ubiquinol-cytochrome c reductase complex (complex III or cytochrome b-c1 complex) that is part of the mitochondrial respiratory chain. The b-c1 complex mediates electron transfer from ubiquinol to cytochrome c. Contributes to the generation of a proton gradient across the mitochondrial membrane that is then used for ATP synthesis. The protein is Cytochrome b (MT-CYB) of Microtus arvalis (Common vole).